The chain runs to 404 residues: Putative replication protein C (404 aa).

The segment at 249-287 (PDQIERHKQNSHPESTNEFEPSSREEQGERPSPAIEPQR) is disordered.

The protein to A.rhizogenes possible replication protein C (RepC).

This is Putative replication protein C from Sinorhizobium fredii (strain NBRC 101917 / NGR234).